The sequence spans 271 residues: Formamidopyrimidine-DNA glycosylase (271 aa).

Residue Pro-2 is the Schiff-base intermediate with DNA of the active site. Glu-3 functions as the Proton donor in the catalytic mechanism. The active-site Proton donor; for beta-elimination activity is Lys-58. DNA is bound by residues His-92, Arg-111, and Lys-152. The FPG-type zinc-finger motif lies at 237-271 (YVYGKVQKPCKICNNIITLIRQNGRSTYFCNACQN). The active-site Proton donor; for delta-elimination activity is the Arg-261.

The protein belongs to the FPG family. In terms of assembly, monomer. The cofactor is Zn(2+).

It carries out the reaction Hydrolysis of DNA containing ring-opened 7-methylguanine residues, releasing 2,6-diamino-4-hydroxy-5-(N-methyl)formamidopyrimidine.. The catalysed reaction is 2'-deoxyribonucleotide-(2'-deoxyribose 5'-phosphate)-2'-deoxyribonucleotide-DNA = a 3'-end 2'-deoxyribonucleotide-(2,3-dehydro-2,3-deoxyribose 5'-phosphate)-DNA + a 5'-end 5'-phospho-2'-deoxyribonucleoside-DNA + H(+). Its function is as follows. Involved in base excision repair of DNA damaged by oxidation or by mutagenic agents. Acts as a DNA glycosylase that recognizes and removes damaged bases. Has a preference for oxidized purines, such as 7,8-dihydro-8-oxoguanine (8-oxoG). Has AP (apurinic/apyrimidinic) lyase activity and introduces nicks in the DNA strand. Cleaves the DNA backbone by beta-delta elimination to generate a single-strand break at the site of the removed base with both 3'- and 5'-phosphates. The polypeptide is Formamidopyrimidine-DNA glycosylase (Wolbachia sp. subsp. Drosophila simulans (strain wRi)).